We begin with the raw amino-acid sequence, 381 residues long: MSYQWLEKALKTIHQANWYRSVTAITSLPGSTIEIDGNTFINFASNDYLGLAGDPRLIKAAVEATQQFGTGSTGSRLLSGHRELHQELETAIASLKQTEEALVFSSGYLANLGTITAIVGTRDLILGDQYNHSSLKNGSKLSSATVLEYDHCNSEDLQEKLQQHRHQYRRCLIITDSIFSMDGNACPLQKLLSLAADFDCMLLVDEAHATGVIGETGAGLVEHFGCSNQPLIMTGTLSKALGSLGGYVAGSRMLIDFLRNRAPTWIYTTGLSPADTSAALEAIKIMQNEPQRRKKLWDNVNYLKEKLCDFNLFTSDSPILCLGIETVEKALTLASQLKEKGIFVPAIRPPTVPTSRLRFSVMATHEETQLQQLVTTLNQLI.

Position 20 (arginine 20) interacts with substrate. Glycine 107–tyrosine 108 contacts pyridoxal 5'-phosphate. Residue histidine 132 participates in substrate binding. Pyridoxal 5'-phosphate is bound by residues serine 180, aspartate 205 to histidine 208, and threonine 236 to lysine 239. Lysine 239 is modified (N6-(pyridoxal phosphate)lysine). Residue threonine 351 participates in substrate binding.

Belongs to the class-II pyridoxal-phosphate-dependent aminotransferase family. BioF subfamily. As to quaternary structure, homodimer. The cofactor is pyridoxal 5'-phosphate.

The enzyme catalyses 6-carboxyhexanoyl-[ACP] + L-alanine + H(+) = (8S)-8-amino-7-oxononanoate + holo-[ACP] + CO2. Its pathway is cofactor biosynthesis; biotin biosynthesis. Catalyzes the decarboxylative condensation of pimeloyl-[acyl-carrier protein] and L-alanine to produce 8-amino-7-oxononanoate (AON), [acyl-carrier protein], and carbon dioxide. This is Putative 8-amino-7-oxononanoate synthase (bioF) from Rippkaea orientalis (strain PCC 8801 / RF-1) (Cyanothece sp. (strain PCC 8801)).